We begin with the raw amino-acid sequence, 868 residues long: DNA topoisomerase 1 (868 aa).

The Toprim domain maps to 3-147 (KSLVIVESPA…RYKRVVFNEI (145 aa)). E9 lines the Mg(2+) pocket. The disordered stretch occupies residues 34 to 70 (IRDLPTSGSSSSKEPAAKGRKSASEAPALSPKEKARR). Residue D116 participates in Mg(2+) binding. A Topo IA-type catalytic domain is found at 163–580 (DINRVNAQQA…EFYGDFKKKL (418 aa)). An interaction with DNA region spans residues 197-202 (SAGRVQ). Catalysis depends on Y324, which acts as the O-(5'-phospho-DNA)-tyrosine intermediate. 3 consecutive C4-type zinc fingers follow at residues 602-633 (CREC…KERC), 664-691 (CPIC…NPDC), and 713-738 (CDKC…NPTC).

This sequence belongs to the type IA topoisomerase family. In terms of assembly, monomer. Mg(2+) serves as cofactor.

It carries out the reaction ATP-independent breakage of single-stranded DNA, followed by passage and rejoining.. In terms of biological role, releases the supercoiling and torsional tension of DNA, which is introduced during the DNA replication and transcription, by transiently cleaving and rejoining one strand of the DNA duplex. Introduces a single-strand break via transesterification at a target site in duplex DNA. The scissile phosphodiester is attacked by the catalytic tyrosine of the enzyme, resulting in the formation of a DNA-(5'-phosphotyrosyl)-enzyme intermediate and the expulsion of a 3'-OH DNA strand. The free DNA strand then undergoes passage around the unbroken strand, thus removing DNA supercoils. Finally, in the religation step, the DNA 3'-OH attacks the covalent intermediate to expel the active-site tyrosine and restore the DNA phosphodiester backbone. This Pseudomonas aeruginosa (strain ATCC 15692 / DSM 22644 / CIP 104116 / JCM 14847 / LMG 12228 / 1C / PRS 101 / PAO1) protein is DNA topoisomerase 1.